The primary structure comprises 156 residues: Large ribosomal subunit protein uL22 (156 aa).

It belongs to the universal ribosomal protein uL22 family. Part of the 50S ribosomal subunit.

This protein binds specifically to 23S rRNA. It makes multiple contacts with different domains of the 23S rRNA in the assembled 50S subunit and ribosome. Its function is as follows. The globular domain of the protein is located near the polypeptide exit tunnel on the outside of the subunit, while an extended beta-hairpin is found that lines the wall of the exit tunnel in the center of the 70S ribosome. The polypeptide is Large ribosomal subunit protein uL22 (Hyperthermus butylicus (strain DSM 5456 / JCM 9403 / PLM1-5)).